The sequence spans 2162 residues: Polyketide synthase 1 (2162 aa).

The interval 19–264 (FVFGDQTSCN…TPLAVHAPYH (246 aa)) is N-terminal acylcarrier protein transacylase domain (SAT). A Ketosynthase family 3 (KS3) domain is found at 397 to 841 (DSKIAIIGMS…GGNTALLVED (445 aa)). Active-site for beta-ketoacyl synthase activity residues include C578, H713, and H757. Residues 941–1245 (AFVFSGQGSQ…PSLMRSHDGW (305 aa)) are malonyl-CoA:ACP transacylase (MAT) domain. S1030 serves as the catalytic For acyl/malonyl transferase activity. The tract at residues 1322 to 1636 (TASVHRIVRE…RRVLDAAMPA (315 aa)) is product template (PT) domain. The segment at 1326 to 1459 (HRIVRESVDR…SSLCFGESRA (134 aa)) is N-terminal hotdog fold. The PKS/mFAS DH domain occupies 1326 to 1631 (HRIVRESVDR…FQGVPRRVLD (306 aa)). Catalysis depends on H1358, which acts as the Proton acceptor; for dehydratase activity. The tract at residues 1486 to 1631 (LNSRLSSGVI…FQGVPRRVLD (146 aa)) is C-terminal hotdog fold. Catalysis depends on D1545, which acts as the Proton donor; for dehydratase activity. The disordered stretch occupies residues 1633–1669 (AMPAPKSPNKTRDHASPNATISRAKPPQGSSPASSAQ). Residues 1658 to 1669 (PPQGSSPASSAQ) are compositionally biased toward low complexity. The region spanning 1692–1766 (IDPMHAVLRI…DFAVHLGLDT (75 aa)) is the Carrier 1 domain. At S1726 the chain carries O-(pantetheine 4'-phosphoryl)serine. Residues 1772–1783 (SSGESNVSGGVS) show a composition bias toward low complexity. The segment at 1772-1809 (SSGESNVSGGVSPRSDSVAAMSSDVTTPPAQSPLGSMS) is disordered. Over residues 1794–1809 (SDVTTPPAQSPLGSMS) the composition is skewed to polar residues. The region spanning 1807 to 1884 (SMSSSPCEDL…SFKHVFEQEI (78 aa)) is the Carrier 2 domain. The residue at position 1844 (S1844) is an O-(pantetheine 4'-phosphoryl)serine. The tract at residues 1896 to 2160 (LKKYHATSTL…ERVAAFIRSA (265 aa)) is thioesterase (TE) domain. S1987 acts as the For thioesterase activity in catalysis.

Polyketide synthase; part of the Pks1 gene cluster that mediates the biosynthesis of an anthraquinone derivative pigment that contributes to conidial pigmentation that provides protection from UV radiation, heat and cold stress. The polyketide synthase Pks1 produces 1-acetyl-2,4,6,8-tetrahydroxy-9,10-anthraquinone though condensation of acetyl-CoA with malonyl-CoA. The dehydratase EthD and the laccase Mlac1 further convert the anthraquinone derivative into the final conidial pigment. In Metarhizium album (strain ARSEF 1941), this protein is Polyketide synthase 1.